Here is a 197-residue protein sequence, read N- to C-terminus: MIKRMSGIALAALLLSGCQGLLPRGETPSQPPAPTTPAKPSVVPTPTPPVVTPVPQPPKMTSVDWQGSFAPLIDQLLSAPGVEAGSILLVDGVQNKTNGQLSMANASEVLRSALAGNPRFQMVSTAQLAQAKQSLGLAANDSLGSRSKAIGLARQVSAQYVLYTTVSGNVQAPRLAMQLMLVQSGEIIWSGKGPVAL.

Positions 1 to 17 (MIKRMSGIALAALLLSG) are cleaved as a signal peptide. Cys-18 carries the N-palmitoyl cysteine lipid modification. Residue Cys-18 is the site of S-diacylglycerol cysteine attachment. A disordered region spans residues 23–57 (PRGETPSQPPAPTTPAKPSVVPTPTPPVVTPVPQP). Over residues 29–57 (SQPPAPTTPAKPSVVPTPTPPVVTPVPQP) the composition is skewed to pro residues.

It belongs to the LpoB family. In terms of assembly, interacts with PBP1b.

The protein resides in the cell outer membrane. Functionally, regulator of peptidoglycan synthesis that is essential for the function of penicillin-binding protein 1B (PBP1b). This chain is Penicillin-binding protein activator LpoB, found in Edwardsiella piscicida.